Reading from the N-terminus, the 705-residue chain is MEKPRSIEETPSSEPMEEEEDDDLELFGGYDSFRSYNSSVGSESSSYLEESSEAENEDREAGELPTSPLHLLSPGTPRSLDGSGSEPAVCEMCGIVGTREAFFSKTKRFCSVSCSRSYSSNSKKASILARLQGKPPTKKAKVLHKAAWSAKIGAFLHSQGTGQLADGTPTGQDALVLGFDWGKFLKDHSYKAAPVSCFKHVPLYDQWEDVMKGMKVEVLNSDAVLPSRVYWIASVIQTAGYRVLLRYEGFENDASHDFWCNLGTVDVHPIGWCAINSKILVPPRTIHAKFTDWKGYLMKRLVGSRTLPVDFHIKMVESMKYPFRQGMRLEVVDKSQVSRTRMAVVDTVIGGRLRLLYEDGDSDDDFWCHMWSPLIHPVGWSRRVGHGIKMSERRSDMAHHPTFRKIYCDAVPYLFKKVRAVYTEGGWFEEGMKLEAIDPLNLGNICVATVCKVLLDGYLMICVDGGPSTDGLDWFCYHASSHAIFPATFCQKNDIELTPPKGYEAQTFNWENYLEKTKSKAAPSRLFNMDCPNHGFKVGMKLEAVDLMEPRLICVATVKRVVHRLLSIHFDGWDSEYDQWVDCESPDIYPVGWCELTGYQLQPPVAAEPATPLKAKEATKKKKKQFGKKRKRIPPTKTRPLRQGSKKPLLEDDPQGARKISSEPVPGEIIAVRVKEEHLDVASPDKASSPELPVSVENIKQETDD.

The disordered stretch occupies residues 1-84; the sequence is MEKPRSIEET…GTPRSLDGSG (84 aa). Position 13 is a phosphoserine (Ser13). Acidic residues predominate over residues 15-25; it reads PMEEEEDDDLE. Low complexity predominate over residues 38-49; the sequence is SSVGSESSSYLE. Acidic residues predominate over residues 50–60; it reads ESSEAENEDRE. Position 67 is a phosphoserine (Ser67). Phosphothreonine is present on Thr76. The segment at 81-116 adopts an FCS-type zinc-finger fold; the sequence is DGSGSEPAVCEMCGIVGTREAFFSKTKRFCSVSCSR. Zn(2+) contacts are provided by Cys90, Cys93, Cys110, and Cys114. MBT repeat units lie at residues 179–283, 291–391, 397–500, and 508–604; these read FDWG…LVPP, TDWK…IKMS, MAHH…LTPP, and FNWE…LQPP. Ser338 carries the phosphoserine modification. Lys405 is covalently cross-linked (Glycyl lysine isopeptide (Lys-Gly) (interchain with G-Cter in SUMO2)). The tract at residues 608–665 is disordered; that stretch reads EPATPLKAKEATKKKKKQFGKKRKRIPPTKTRPLRQGSKKPLLEDDPQGARKISSEPV. The segment covering 619-634 has biased composition (basic residues); it reads TKKKKKQFGKKRKRIP. Glycyl lysine isopeptide (Lys-Gly) (interchain with G-Cter in SUMO2) cross-links involve residues Lys647, Lys659, and Lys675. Residues 680 to 705 form a disordered region; that stretch reads DVASPDKASSPELPVSVENIKQETDD. Residues Ser683, Ser688, and Ser689 each carry the phosphoserine modification. A Glycyl lysine isopeptide (Lys-Gly) (interchain with G-Cter in SUMO1); alternate cross-link involves residue Lys700. A Glycyl lysine isopeptide (Lys-Gly) (interchain with G-Cter in SUMO2); alternate cross-link involves residue Lys700.

Part of the E2F6.com-1 complex in G0 phase composed of E2F6, MGA, MAX, TFDP1, CBX3, BAT8, EUHMTASE1, RING1, RNF2, MBLR, BAT8 and YAF2.

It is found in the nucleus. Functionally, putative Polycomb group (PcG) protein. PcG proteins maintain the transcriptionally repressive state of genes, probably via a modification of chromatin, rendering it heritably changed in its expressibility. Its association with a chromatin-remodeling complex suggests that it may contribute to prevent expression of genes that trigger the cell into mitosis. Binds to monomethylated and dimethylated 'Lys-20' on histone H4. Binds histone H3 peptides that are monomethylated or dimethylated on 'Lys-4', 'Lys-9' or 'Lys-27'. This Homo sapiens (Human) protein is Lethal(3)malignant brain tumor-like protein 2 (L3MBTL2).